A 414-amino-acid polypeptide reads, in one-letter code: 2,3-bisphosphoglycerate-independent phosphoglycerate mutase (414 aa).

Belongs to the BPG-independent phosphoglycerate mutase family. A-PGAM subfamily.

The catalysed reaction is (2R)-2-phosphoglycerate = (2R)-3-phosphoglycerate. It participates in carbohydrate degradation; glycolysis; pyruvate from D-glyceraldehyde 3-phosphate: step 3/5. In terms of biological role, catalyzes the interconversion of 2-phosphoglycerate and 3-phosphoglycerate. This Saccharolobus solfataricus (strain ATCC 35092 / DSM 1617 / JCM 11322 / P2) (Sulfolobus solfataricus) protein is 2,3-bisphosphoglycerate-independent phosphoglycerate mutase.